The primary structure comprises 360 residues: UDP-N-acetylglucosamine--N-acetylmuramyl-(pentapeptide) pyrophosphoryl-undecaprenol N-acetylglucosamine transferase (360 aa).

UDP-N-acetyl-alpha-D-glucosamine is bound by residues 12–14 (TAG), serine 198, and glutamine 289.

It belongs to the glycosyltransferase 28 family. MurG subfamily.

It localises to the cell membrane. It carries out the reaction Mur2Ac(oyl-L-Ala-gamma-D-Glu-L-Lys-D-Ala-D-Ala)-di-trans,octa-cis-undecaprenyl diphosphate + UDP-N-acetyl-alpha-D-glucosamine = beta-D-GlcNAc-(1-&gt;4)-Mur2Ac(oyl-L-Ala-gamma-D-Glu-L-Lys-D-Ala-D-Ala)-di-trans,octa-cis-undecaprenyl diphosphate + UDP + H(+). The protein operates within cell wall biogenesis; peptidoglycan biosynthesis. Cell wall formation. Catalyzes the transfer of a GlcNAc subunit on undecaprenyl-pyrophosphoryl-MurNAc-pentapeptide (lipid intermediate I) to form undecaprenyl-pyrophosphoryl-MurNAc-(pentapeptide)GlcNAc (lipid intermediate II). In Streptococcus equi subsp. zooepidemicus (strain H70), this protein is UDP-N-acetylglucosamine--N-acetylmuramyl-(pentapeptide) pyrophosphoryl-undecaprenol N-acetylglucosamine transferase.